An 804-amino-acid chain; its full sequence is Phenylalanine--tRNA ligase beta subunit (804 aa).

Residues 40-153 enclose the tRNA-binding domain; it reads PLPDLRVVVG…SSYAVGEPFA (114 aa). Positions 400-476 constitute a B5 domain; that stretch reads PALLVLPFRP…RLHGYDNIEA (77 aa). The Mg(2+) site is built by D454, D460, E463, and E464. Residues 710-802 form the FDX-ACB domain; the sequence is SKFPAVQRDL…AESKLGAVIR (93 aa).

The protein belongs to the phenylalanyl-tRNA synthetase beta subunit family. Type 1 subfamily. Tetramer of two alpha and two beta subunits. Mg(2+) is required as a cofactor.

It localises to the cytoplasm. The catalysed reaction is tRNA(Phe) + L-phenylalanine + ATP = L-phenylalanyl-tRNA(Phe) + AMP + diphosphate + H(+). In Chlorobium luteolum (strain DSM 273 / BCRC 81028 / 2530) (Pelodictyon luteolum), this protein is Phenylalanine--tRNA ligase beta subunit.